The sequence spans 341 residues: NADH-quinone oxidoreductase subunit H 1 (341 aa).

The next 8 helical transmembrane spans lie at 13–33 (LVVI…IAYI), 82–102 (GLFL…WAVI), 115–135 (VGVL…IMAG), 161–181 (IGFV…TAIV), 190–210 (MLGW…VSAL), 248–268 (YVAI…GWLP), 277–297 (WVPG…LFAM), and 313–333 (LGWK…ASVL).

Belongs to the complex I subunit 1 family. As to quaternary structure, NDH-1 is composed of 14 different subunits. Subunits NuoA, H, J, K, L, M, N constitute the membrane sector of the complex.

It is found in the cell inner membrane. The enzyme catalyses a quinone + NADH + 5 H(+)(in) = a quinol + NAD(+) + 4 H(+)(out). NDH-1 shuttles electrons from NADH, via FMN and iron-sulfur (Fe-S) centers, to quinones in the respiratory chain. The immediate electron acceptor for the enzyme in this species is believed to be ubiquinone. Couples the redox reaction to proton translocation (for every two electrons transferred, four hydrogen ions are translocated across the cytoplasmic membrane), and thus conserves the redox energy in a proton gradient. This subunit may bind ubiquinone. This Rhodopseudomonas palustris (strain ATCC BAA-98 / CGA009) protein is NADH-quinone oxidoreductase subunit H 1.